A 430-amino-acid chain; its full sequence is Adenylosuccinate synthetase (430 aa).

GTP-binding positions include 12 to 18 (GDEGKGK) and 40 to 42 (GHT). Aspartate 13 functions as the Proton acceptor in the catalytic mechanism. The Mg(2+) site is built by aspartate 13 and glycine 40. IMP-binding positions include 13 to 16 (DEGK), 38 to 41 (NAGH), threonine 130, arginine 144, glutamine 224, threonine 239, and arginine 303. Histidine 41 serves as the catalytic Proton donor. 299–305 (TVTGRKR) lines the substrate pocket. Residues arginine 305, 331–333 (KLD), and 413–415 (STS) contribute to the GTP site.

The protein belongs to the adenylosuccinate synthetase family. As to quaternary structure, homodimer. Mg(2+) serves as cofactor.

The protein localises to the cytoplasm. It carries out the reaction IMP + L-aspartate + GTP = N(6)-(1,2-dicarboxyethyl)-AMP + GDP + phosphate + 2 H(+). It participates in purine metabolism; AMP biosynthesis via de novo pathway; AMP from IMP: step 1/2. Plays an important role in the de novo pathway of purine nucleotide biosynthesis. Catalyzes the first committed step in the biosynthesis of AMP from IMP. This is Adenylosuccinate synthetase from Cereibacter sphaeroides (strain KD131 / KCTC 12085) (Rhodobacter sphaeroides).